Here is a 180-residue protein sequence, read N- to C-terminus: Peptide deformylase (180 aa).

Positions 96 and 138 each coordinate Fe cation. E139 is an active-site residue. Residue H142 coordinates Fe cation.

This sequence belongs to the polypeptide deformylase family. Fe(2+) is required as a cofactor.

The enzyme catalyses N-terminal N-formyl-L-methionyl-[peptide] + H2O = N-terminal L-methionyl-[peptide] + formate. In terms of biological role, removes the formyl group from the N-terminal Met of newly synthesized proteins. Requires at least a dipeptide for an efficient rate of reaction. N-terminal L-methionine is a prerequisite for activity but the enzyme has broad specificity at other positions. The sequence is that of Peptide deformylase from Rhodopseudomonas palustris (strain BisA53).